Consider the following 675-residue polypeptide: Dihydrolipoyllysine-residue acetyltransferase component of pyruvate dehydrogenase complex (675 aa).

A Lipoyl-binding 1 domain is found at 2–77 (AFSVEMPELG…DVGGVIAIIG (76 aa)). The residue at position 43 (K43) is an N6-lipoyllysine. Residues 77-124 (GDADETPANEAPADEAPAPAEEEEPVKEEPKKEAAPEAPAATGAATDV) are disordered. Composition is skewed to low complexity over residues 84–95 (ANEAPADEAPAP) and 112–124 (PEAP…ATDV). Residues 121-196 (ATDVEMPELG…DVGAVIARIG (76 aa)) form the Lipoyl-binding 2 domain. K162 carries the N6-lipoyllysine modification. Residues 200–240 (AAAAPAEEEAAPAEEEEPVKEEPKKEAAPEAPAATGAATDV) form a disordered region. The segment covering 205–218 (AEEEAAPAEEEEPV) has biased composition (acidic residues). Positions 237–312 (ATDVEMPELG…DVGAVIARIG (76 aa)) constitute a Lipoyl-binding 3 domain. The residue at position 278 (K278) is an N6-lipoyllysine. The tract at residues 316–368 (AAAAPAEEEAAPAEEEEPVKEEPKKEEPKKEEPKKEAATTPAAASATVSASGD) is disordered. Residues 321 to 334 (AEEEAAPAEEEEPV) are compositionally biased toward acidic residues. A compositionally biased stretch (basic and acidic residues) spans 335–352 (KEEPKKEEPKKEEPKKEA). Low complexity predominate over residues 353–366 (ATTPAAASATVSAS). Positions 372 to 409 (YVTPLVRKLAEKHGVDLNTVTGTGIGGRIRKQDVLAAA) constitute a Peripheral subunit-binding (PSBD) domain. Active-site residues include H645 and D649.

Belongs to the 2-oxoacid dehydrogenase family. In terms of assembly, forms a 24-polypeptide structural core with octahedral symmetry. Part of an unusual ODH/PDH supercomplex, consisting of AceE (E1), AceF (E2), and Lpd (E3) together with OdhA (E1+E2). (R)-lipoate serves as cofactor.

It carries out the reaction N(6)-[(R)-dihydrolipoyl]-L-lysyl-[protein] + acetyl-CoA = N(6)-[(R)-S(8)-acetyldihydrolipoyl]-L-lysyl-[protein] + CoA. Functionally, is essential for both 2-oxoglutarate dehydrogenase (ODH) and pyruvate dehydrogenase (PDH) activities, but AceF has exclusively transacetylase (and no transsuccinylase) activity. The lipoyl residues required for ODH activity are likely provided by AceF. In Corynebacterium glutamicum (strain ATCC 13032 / DSM 20300 / JCM 1318 / BCRC 11384 / CCUG 27702 / LMG 3730 / NBRC 12168 / NCIMB 10025 / NRRL B-2784 / 534), this protein is Dihydrolipoyllysine-residue acetyltransferase component of pyruvate dehydrogenase complex (aceF).